Consider the following 102-residue polypeptide: Small ribosomal subunit protein uS10 (102 aa).

This sequence belongs to the universal ribosomal protein uS10 family. Part of the 30S ribosomal subunit.

In terms of biological role, involved in the binding of tRNA to the ribosomes. This chain is Small ribosomal subunit protein uS10, found in Caldanaerobacter subterraneus subsp. tengcongensis (strain DSM 15242 / JCM 11007 / NBRC 100824 / MB4) (Thermoanaerobacter tengcongensis).